The following is a 142-amino-acid chain: Baculoviral IAP repeat-containing protein 5 (142 aa).

The BIR repeat unit spans residues 18 to 88 (RISTFKNWPF…KHSSGCAFLS (71 aa)). A Phosphoserine; by AURKC modification is found at Ser-20. At Lys-23 the chain carries N6-acetyllysine. A Phosphothreonine; by CDK1 and CDK15 modification is found at Thr-34. Position 48 is a phosphothreonine (Thr-48). Cys-57, Cys-60, His-77, and Cys-84 together coordinate Zn(2+). Residues Lys-90, Lys-110, Lys-112, and Lys-115 each carry the N6-acetyllysine modification. Residue Thr-117 is modified to Phosphothreonine; by AURKB. Residue Lys-129 is modified to N6-acetyllysine.

The protein belongs to the IAP family. Monomer or homodimer. Exists as a homodimer in the apo state and as a monomer in the CPC-bound state. The monomer protects cells against apoptosis more efficiently than the dimer. Only the dimeric form is capable of enhancing tubulin stability in cells. When phosphorylated, interacts with LAMTOR5/HBXIP; the resulting complex binds pro-CASP9, as well as active CASP9, but much less efficiently. Component of the chromosomal passenger complex (CPC) composed of at least BIRC5/survivin, CDCA8/borealin, INCENP, AURKB or AURKC; in the complex forms a triple-helix bundle-based subcomplex with INCENP and CDCA8. Interacts with JTB. Interacts (via BIR domain) with histone H3 phosphorylated at 'Thr-3' (H3pT3). Interacts with EVI5. Interacts with GTP-bound RAN in both the S and M phases of the cell cycle. Interacts with USP9X. Interacts with tubulin. Interacts with BIRC2/c-IAP1. The acetylated form at Lys-129 interacts with STAT3. The monomeric form deacetylated at Lys-129 interacts with XPO1/CRM1. The monomeric form interacts with XIAP/BIRC4. Both the dimeric and monomeric form can interact with DIABLO/SMAC. Interacts with BIRC6/bruce. Interacts with FBXL7; this interaction facilitates the polyubiquitination and subsequent proteasomal degradation of BIRC5 by the SCF(FBXL7) E3 ubiquitin-protein ligase complex. In terms of processing, ubiquitinated by the Cul9-RING ubiquitin-protein ligase complex, leading to its degradation. Ubiquitination is required for centrosomal targeting. Deubiquitinated by USP35 or USP38; leading to stabilization. Post-translationally, acetylation at Lys-129 results in its homodimerization, while deacetylation promotes the formation of monomers which heterodimerize with XPO1/CRM1 which facilitates its nuclear export. The acetylated form represses STAT3 transactivation. The dynamic equilibrium between its acetylation and deacetylation at Lys-129 determines its interaction with XPO1/CRM1, its subsequent subcellular localization, and its ability to inhibit STAT3 transactivation. In vitro phosphorylation at Thr-117 by AURKB prevents interaction with INCENP and localization to mitotic chromosomes. Phosphorylation at Thr-48 by CK2 is critical for its mitotic and anti-apoptotic activities. Phosphorylation at Thr-34 by CDK15 is critical for its anti-apoptotic activity. Phosphorylation at Ser-20 by AURKC is critical for regulation of proper chromosome alignment and segregation, and possibly cytokinesis.

The protein resides in the cytoplasm. The protein localises to the nucleus. It localises to the chromosome. Its subcellular location is the centromere. It is found in the cytoskeleton. The protein resides in the spindle. The protein localises to the kinetochore. It localises to the midbody. Its function is as follows. Multitasking protein that has dual roles in promoting cell proliferation and preventing apoptosis. Component of a chromosome passage protein complex (CPC) which is essential for chromosome alignment and segregation during mitosis and cytokinesis. Acts as an important regulator of the localization of this complex; directs CPC movement to different locations from the inner centromere during prometaphase to midbody during cytokinesis and participates in the organization of the center spindle by associating with polymerized microtubules. Involved in the recruitment of CPC to centromeres during early mitosis via association with histone H3 phosphorylated at 'Thr-3' (H3pT3) during mitosis. The complex with RAN plays a role in mitotic spindle formation by serving as a physical scaffold to help deliver the RAN effector molecule TPX2 to microtubules. May counteract a default induction of apoptosis in G2/M phase. The acetylated form represses STAT3 transactivation of target gene promoters. May play a role in neoplasia. Inhibitor of CASP3 and CASP7. Essential for the maintenance of mitochondrial integrity and function. In Felis catus (Cat), this protein is Baculoviral IAP repeat-containing protein 5 (BIRC5).